A 683-amino-acid chain; its full sequence is U4/U6 small nuclear ribonucleoprotein Prp3 (683 aa).

In terms of domain architecture, PWI spans 1 to 87; it reads MALSKRELDE…HSKSSSDRSR (87 aa). Residues 73 to 107 show a composition bias toward basic and acidic residues; it reads GRSSRHSKSSSDRSRKRDLKEVFGDDSEISKESSG. A disordered region spans residues 73 to 135; sequence GRSSRHSKSS…IPGPPSESPG (63 aa). K139 is covalently cross-linked (Glycyl lysine isopeptide (Lys-Gly) (interchain with G-Cter in SUMO2)). The tract at residues 153–183 is disordered; sequence IEERKKQLSFISPPTPQPKTPSSSQPERLPI. S164 is subject to Phosphoserine. Phosphothreonine is present on T167. Residues K244 and K252 each participate in a glycyl lysine isopeptide (Lys-Gly) (interchain with G-Cter in SUMO2) cross-link. Residues 416-550 are mediates interaction with SART3; sequence NLVEHPAQLN…VHISVYRVRN (135 aa). S619 carries the phosphoserine modification.

As to quaternary structure, component of the precatalytic spliceosome (spliceosome B complex). Component of the U4/U6-U5 tri-snRNP complex, a building block of the precatalytic spliceosome (spliceosome B complex). The U4/U6-U5 tri-snRNP complex is composed of the U4, U6 and U5 snRNAs and at least PRPF3, PRPF4, PRPF6, PRPF8, PRPF31, SNRNP200, TXNL4A, SNRNP40, SNRPB, SNRPD1, SNRPD2, SNRPD3, SNRPE, SNRPF, SNRPG, DDX23, CD2BP2, PPIH, SNU13, EFTUD2, SART1 and USP39, plus LSM2, LSM3, LSM4, LSM5, LSM6, LSM7 and LSM8. Interacts directly with PRPF4. Part of a heteromeric complex containing PPIH, PRPF3 and PRPF4 that is stable in the absence of RNA. Interacts with SART3; the interaction is direct and recruits the deubiquitinase USP4 to PRPF3. Interacts with PRPF19. Interacts ('Lys-63'-linked polyubiquitinated) with PRPF8 (via the MPN (JAB/Mov34) domain); may stabilize the U4/U6-U5 tri-snRNP complex. Interacts with ERCC6. Ubiquitinated. Undergoes 'Lys-63'-linked polyubiquitination by PRPF19 and deubiquitination by USP4. 'Lys-63'-linked ubiquitination increases the affinity for PRPF8 and may regulate the assembly of the U4/U6-U5 tri-snRNP complex.

The protein resides in the nucleus. It is found in the nucleus speckle. Its function is as follows. Plays a role in pre-mRNA splicing as component of the U4/U6-U5 tri-snRNP complex that is involved in spliceosome assembly, and as component of the precatalytic spliceosome (spliceosome B complex). The polypeptide is U4/U6 small nuclear ribonucleoprotein Prp3 (PRPF3) (Bos taurus (Bovine)).